The primary structure comprises 179 residues: Large ribosomal subunit protein uL5 (179 aa).

This sequence belongs to the universal ribosomal protein uL5 family. Part of the 50S ribosomal subunit; part of the 5S rRNA/L5/L18/L25 subcomplex. Contacts the 5S rRNA and the P site tRNA. Forms a bridge to the 30S subunit in the 70S ribosome.

Its function is as follows. This is one of the proteins that bind and probably mediate the attachment of the 5S RNA into the large ribosomal subunit, where it forms part of the central protuberance. In the 70S ribosome it contacts protein S13 of the 30S subunit (bridge B1b), connecting the 2 subunits; this bridge is implicated in subunit movement. Contacts the P site tRNA; the 5S rRNA and some of its associated proteins might help stabilize positioning of ribosome-bound tRNAs. This is Large ribosomal subunit protein uL5 from Shewanella baltica (strain OS223).